A 220-amino-acid chain; its full sequence is ATP-dependent dethiobiotin synthetase BioD (220 aa).

An ATP-binding site is contributed by 13–18 (EVGKTV). Mg(2+) is bound at residue Thr-17. The active site involves Lys-38. Residue Ser-42 participates in substrate binding. ATP-binding positions include Asp-55, 116-119 (EGAG), 176-177 (NR), and Asn-212. Positions 55 and 116 each coordinate Mg(2+).

It belongs to the dethiobiotin synthetase family. Homodimer. Mg(2+) serves as cofactor.

It is found in the cytoplasm. The catalysed reaction is (7R,8S)-7,8-diammoniononanoate + CO2 + ATP = (4R,5S)-dethiobiotin + ADP + phosphate + 3 H(+). Its pathway is cofactor biosynthesis; biotin biosynthesis; biotin from 7,8-diaminononanoate: step 1/2. Its function is as follows. Catalyzes a mechanistically unusual reaction, the ATP-dependent insertion of CO2 between the N7 and N8 nitrogen atoms of 7,8-diaminopelargonic acid (DAPA, also called 7,8-diammoniononanoate) to form a ureido ring. The chain is ATP-dependent dethiobiotin synthetase BioD from Photobacterium profundum (strain SS9).